Reading from the N-terminus, the 157-residue chain is SsrA-binding protein (157 aa).

The segment at 131-157 (KQLHDKRDTEKKRDWSREKGRIMRARG) is disordered. Residues 132–151 (QLHDKRDTEKKRDWSREKGR) show a composition bias toward basic and acidic residues.

Belongs to the SmpB family.

It is found in the cytoplasm. Required for rescue of stalled ribosomes mediated by trans-translation. Binds to transfer-messenger RNA (tmRNA), required for stable association of tmRNA with ribosomes. tmRNA and SmpB together mimic tRNA shape, replacing the anticodon stem-loop with SmpB. tmRNA is encoded by the ssrA gene; the 2 termini fold to resemble tRNA(Ala) and it encodes a 'tag peptide', a short internal open reading frame. During trans-translation Ala-aminoacylated tmRNA acts like a tRNA, entering the A-site of stalled ribosomes, displacing the stalled mRNA. The ribosome then switches to translate the ORF on the tmRNA; the nascent peptide is terminated with the 'tag peptide' encoded by the tmRNA and targeted for degradation. The ribosome is freed to recommence translation, which seems to be the essential function of trans-translation. The protein is SsrA-binding protein of Rhodopseudomonas palustris (strain BisB18).